The chain runs to 140 residues: FAD synthase (140 aa).

ATP-binding positions include 9–10 (TF), 14–17 (HPGH), Asn-92, and Tyr-119.

It belongs to the archaeal FAD synthase family. Homodimer. Requires a divalent metal cation as cofactor.

The catalysed reaction is FMN + ATP + H(+) = FAD + diphosphate. Its pathway is cofactor biosynthesis; FAD biosynthesis; FAD from FMN: step 1/1. Functionally, catalyzes the transfer of the AMP portion of ATP to flavin mononucleotide (FMN) to produce flavin adenine dinucleotide (FAD) coenzyme. This Methanocorpusculum labreanum (strain ATCC 43576 / DSM 4855 / Z) protein is FAD synthase.